The sequence spans 444 residues: Probable glycine dehydrogenase (decarboxylating) subunit 1 (444 aa).

The protein belongs to the GcvP family. N-terminal subunit subfamily. As to quaternary structure, the glycine cleavage system is composed of four proteins: P, T, L and H. In this organism, the P 'protein' is a heterodimer of two subunits.

It carries out the reaction N(6)-[(R)-lipoyl]-L-lysyl-[glycine-cleavage complex H protein] + glycine + H(+) = N(6)-[(R)-S(8)-aminomethyldihydrolipoyl]-L-lysyl-[glycine-cleavage complex H protein] + CO2. In terms of biological role, the glycine cleavage system catalyzes the degradation of glycine. The P protein binds the alpha-amino group of glycine through its pyridoxal phosphate cofactor; CO(2) is released and the remaining methylamine moiety is then transferred to the lipoamide cofactor of the H protein. The polypeptide is Probable glycine dehydrogenase (decarboxylating) subunit 1 (Moorella thermoacetica (strain ATCC 39073 / JCM 9320)).